Here is a 154-residue protein sequence, read N- to C-terminus: 6,7-dimethyl-8-ribityllumazine synthase (154 aa).

Residues Phe22, 57 to 59 (AYE), and 81 to 83 (AVI) contribute to the 5-amino-6-(D-ribitylamino)uracil site. 86–87 (GT) lines the (2S)-2-hydroxy-3-oxobutyl phosphate pocket. The active-site Proton donor is the His89. Residue Phe114 coordinates 5-amino-6-(D-ribitylamino)uracil. Residue Arg128 coordinates (2S)-2-hydroxy-3-oxobutyl phosphate.

The protein belongs to the DMRL synthase family. In terms of assembly, forms an icosahedral capsid composed of 60 subunits, arranged as a dodecamer of pentamers.

It carries out the reaction (2S)-2-hydroxy-3-oxobutyl phosphate + 5-amino-6-(D-ribitylamino)uracil = 6,7-dimethyl-8-(1-D-ribityl)lumazine + phosphate + 2 H2O + H(+). Its pathway is cofactor biosynthesis; riboflavin biosynthesis; riboflavin from 2-hydroxy-3-oxobutyl phosphate and 5-amino-6-(D-ribitylamino)uracil: step 1/2. Functionally, catalyzes the formation of 6,7-dimethyl-8-ribityllumazine by condensation of 5-amino-6-(D-ribitylamino)uracil with 3,4-dihydroxy-2-butanone 4-phosphate. This is the penultimate step in the biosynthesis of riboflavin. This is 6,7-dimethyl-8-ribityllumazine synthase from Colwellia psychrerythraea (strain 34H / ATCC BAA-681) (Vibrio psychroerythus).